The sequence spans 172 residues: Zinc finger protein 580 (172 aa).

Residues 1–92 (MLLLPPRPPH…PGEPGPRKGY (92 aa)) are disordered. Residues 19-30 (MDPPPPKTPPFP) show a composition bias toward pro residues. Lys31 is covalently cross-linked (Glycyl lysine isopeptide (Lys-Gly) (interchain with G-Cter in SUMO2)). The C2H2-type 1 zinc finger occupies 92 to 114 (YSCPECARVFASPLRLQSHRVSH). Lys118 participates in a covalent cross-link: Glycyl lysine isopeptide (Lys-Gly) (interchain with G-Cter in SUMO2). 2 C2H2-type zinc fingers span residues 120-142 (FTCG…RATH) and 150-172 (HTCP…VRLH).

Interacts with SMAD2.

It localises to the nucleus. In terms of biological role, involved in the regulation of endothelial cell proliferation and migration. Mediates H(2)O(2)-induced leukocyte chemotaxis by elevating interleukin-8 production and may play a role in inflammation. May be involved in transcriptional regulation. The chain is Zinc finger protein 580 (Znf580) from Mus musculus (Mouse).